A 552-amino-acid chain; its full sequence is MAAKVLKFSHEVLHAMSRGVEVLANAVKVTLGPKGRNVVLDKSFGAPTITKDGVSVAKEIELEDKFENMGAQMVKEVASRTSDDAGDGTTTATVLAQAILVEGIKAVIAGMNPMDLKRGIDKAVTAAVAELKKISKPCKDQKAIAQVGTISANSDKSIGDIIAEAMEKVGKEGVITVEDGSGLENALEVVEGMQFDRGYLSPYFINNQQNMSAELENPFILLVDKKISNIRELIPLLENVAKSGRPLLVIAEDIEGEALATLVVNNIRGVVKVAAVKAPGFGDRRKAMLQDIAVLTGGKVISEEVGLSLEAASLDDLGSAKRVVVTKDDTTIIDGSGDAGDIKNRVEQIRKEIENSSSDYDKEKLQERLAKLAGGVAVIKVGAATEVEMKEKKARVEDALHATRAAVEEGVVPGGGVALIRVLKSLDSVEVENEDQRVGVEIARRAMAYPLSQIVKNTGVQAAVVADKVLNHKDVNYGYNAATGEYGDMIEMGILDPTKVTRTALQNAASIAGLMITTECMVTEAPKKKEESMPGGGDMGGMGGMGGMGGMM.

Residues 30-33 (TLGP), lysine 51, 87-91 (DGTTT), glycine 415, 480-482 (NAA), and aspartate 496 each bind ATP.

It belongs to the chaperonin (HSP60) family. Forms a cylinder of 14 subunits composed of two heptameric rings stacked back-to-back. Interacts with the co-chaperonin GroES.

Its subcellular location is the cytoplasm. The enzyme catalyses ATP + H2O + a folded polypeptide = ADP + phosphate + an unfolded polypeptide.. In terms of biological role, together with its co-chaperonin GroES, plays an essential role in assisting protein folding. The GroEL-GroES system forms a nano-cage that allows encapsulation of the non-native substrate proteins and provides a physical environment optimized to promote and accelerate protein folding. This is Chaperonin GroEL from Coxiella burnetii (strain RSA 493 / Nine Mile phase I).